The sequence spans 128 residues: Glycine cleavage system H protein (128 aa).

Residues 24 to 106 enclose the Lipoyl-binding domain; the sequence is VYSVGITEHA…YTDGWLFSIK (83 aa). Lysine 65 is subject to N6-lipoyllysine.

The protein belongs to the GcvH family. The glycine cleavage system is composed of four proteins: P, T, L and H. It depends on (R)-lipoate as a cofactor.

Its function is as follows. The glycine cleavage system catalyzes the degradation of glycine. The H protein shuttles the methylamine group of glycine from the P protein to the T protein. This Yersinia pseudotuberculosis serotype O:1b (strain IP 31758) protein is Glycine cleavage system H protein.